Consider the following 1103-residue polypeptide: Kinesin-like protein KIF1C (1103 aa).

Residues 5–348 (SVKVAVRVRP…LRYADRTKQI (344 aa)) enclose the Kinesin motor domain. 97-104 (GQTGAGKS) contributes to the ATP binding site. Ser295 carries the post-translational modification Phosphoserine. 2 coiled-coil regions span residues 359–388 (NARL…SALE) and 438–479 (EEAM…LAEM). Residues 400–438 (ALPAVSSPPAPVSPSSPTTHNGELEPSFSPNTESQIGPE) form a disordered region. Phosphoserine is present on Ser494. Residues 523-590 (TRVGQVDMDI…LKSGNRIVMG (68 aa)) form the FHA domain. The stretch at 633–674 (EQQGIDIKLEMEKRLQDLENQYRKEKEEADLLLEQQRLYADS) forms a coiled coil. Phosphoserine is present on residues Ser674 and Ser676. Disordered regions lie at residues 808-828 (GEEE…ARGA), 874-924 (LAQD…WERV), and 950-1103 (QGLQ…GAAV). Gly residues predominate over residues 813–822 (GGAGSGGGSE). Residues 828 to 872 (AEVEDLRAHIDKLTGILQEVKLQNSSKDRELQALRDRMLRMERVI) are a coiled coil. The segment covering 893 to 910 (PEGSEAAEEAAPSDRMPS) has biased composition (low complexity). Residue Ser915 is modified to Phosphoserine. A compositionally biased stretch (gly residues) spans 953-962 (QGSGGRGGGL). Over residues 1021–1031 (PSPRRSHHPRR) the composition is skewed to basic residues. Position 1033 is a phosphoserine (Ser1033). Arg1041 is subject to Omega-N-methylarginine. Residues 1062 to 1083 (PQPPQPYPAQRPPGPRYPPYTT) show a composition bias toward pro residues. Thr1083 carries the phosphothreonine modification. Ser1092 carries the post-translational modification Phosphoserine. Positions 1092 to 1103 (SAPDLKESGAAV) are enriched in basic and acidic residues.

This sequence belongs to the TRAFAC class myosin-kinesin ATPase superfamily. Kinesin family. Unc-104 subfamily. In terms of assembly, monomer. Interacts with BICD2. In terms of processing, phosphorylated on tyrosine residues. As to expression, expressed in all tissues examined, with most abundant expression in heart and skeletal muscle.

It localises to the cytoplasm. It is found in the cytoskeleton. In terms of biological role, motor required for the retrograde transport of Golgi vesicles to the endoplasmic reticulum. Has a microtubule plus end-directed motility. The chain is Kinesin-like protein KIF1C (KIF1C) from Homo sapiens (Human).